Here is a 110-residue protein sequence, read N- to C-terminus: UPF0145 protein Blon_0093/BLIJ_0092 (110 aa).

The protein belongs to the UPF0145 family.

The chain is UPF0145 protein Blon_0093/BLIJ_0092 from Bifidobacterium longum subsp. infantis (strain ATCC 15697 / DSM 20088 / JCM 1222 / NCTC 11817 / S12).